A 666-amino-acid polypeptide reads, in one-letter code: MSDSHLTAFDKASKAGFIIALGIVYGDIGTSPLYTMQSLVENQGGVNQVSESFILGSISLIIWTLTLITTIKYVLIALKADNHHEGGIFSLFTLVRKMSPWLIVPAMIGGATLLSDGALTPAVTVTSAIEGLKAVPGLSHIYQNQTNVIITTLVILIVLFGIQRFGTGFIGKIFGPVMFIWFSFLGVSGFFNMLGHLEIFKAINPYYALHLLFSPENHRGIFILGSIFLATTGAEALYSDLGHVGRGNIYVSWPFVKMCIVLSYCGQAAWILANKHSGIELNPFFASVPSQLRVYLVSLATLAAIIASQALISGSFTLVSEAMRLKIFPLFRVTYPGANLGQLYIPVINWILFAVTSCTVLAFRTSAHMEAAYGLAITITMLMTTILLKYYLIKKGTRPILAHLVMAFFALVEFIFFLASAIKFMHGGYAVVILALAIVFVMFIWHAGTRIVFKYVKSLNLNDYKEQIKQLRDDVCFDLYQTNVVYLSNRMQDHMIDRSILYSILDKRPKRAQVYWFVNVQVTDEPYTAKYKVDMMGTDYMVRVNLYLGFRMPQTVPRYLRTIVQDLMESGRLPKQEQEYTITPGRDVGDFRFVLIEERVSNARQLSNFERFIMQTKASIKHVTASPMRWFGLQYSEVTLEVVPLILSDILKLPIKELVPVEDSEA.

The next 12 membrane-spanning stretches (helical) occupy residues 16 to 36 (GFIIALGIVYGDIGTSPLYTM), 58 to 78 (ISLIIWTLTLITTIKYVLIAL), 100 to 120 (PWLIVPAMIGGATLLSDGALT), 149 to 169 (IITTLVILIVLFGIQRFGTGF), 173 to 193 (IFGPVMFIWFSFLGVSGFFNM), 221 to 241 (IFILGSIFLATTGAEALYSDL), 253 to 273 (WPFVKMCIVLSYCGQAAWILA), 294 to 314 (VYLVSLATLAAIIASQALISG), 343 to 363 (LYIPVINWILFAVTSCTVLAF), 373 to 393 (YGLAITITMLMTTILLKYYLI), 399 to 419 (PILAHLVMAFFALVEFIFFLA), and 424 to 444 (FMHGGYAVVILALAIVFVMFI).

This sequence belongs to the HAK/KUP transporter (TC 2.A.72) family.

It is found in the cell membrane. The catalysed reaction is K(+)(in) + H(+)(in) = K(+)(out) + H(+)(out). Transport of potassium into the cell. Likely operates as a K(+):H(+) symporter. This chain is Probable potassium transport system protein Kup, found in Streptococcus pyogenes serotype M3 (strain ATCC BAA-595 / MGAS315).